The following is a 55-amino-acid chain: Large ribosomal subunit protein bL33 (55 aa).

The span at 1-11 (MAKSGRDKIKL) shows a compositional bias: basic and acidic residues. Residues 1-27 (MAKSGRDKIKLESTAGTGHFYTTTKNK) form a disordered region. The segment covering 14-24 (TAGTGHFYTTT) has biased composition (polar residues).

Belongs to the bacterial ribosomal protein bL33 family.

This Herminiimonas arsenicoxydans protein is Large ribosomal subunit protein bL33.